The following is a 413-amino-acid chain: Protein PHR1-LIKE 1 (413 aa).

Disordered regions lie at residues 171-196 (SEPN…TPFL) and 208-233 (QQQM…SKQR). 2 stretches are compositionally biased toward polar residues: residues 181–191 (DSSSHNPNSEI) and 208–231 (QQQM…ATSK). An HTH myb-type domain is found at 228 to 288 (ATSKQRMRWT…HLQKYRTARY (61 aa)). Positions 259–284 (PKAVLKLLNNPGLTIYHVKSHLQKYR) form a DNA-binding region, H-T-H motif. A coiled coil region spans residues 322-342 (TQALRLQMEVQKRLHEQLEIQ). The LHEQLE signature appears at 335–340 (LHEQLE). Positions 363–413 (QQKIQDNKSSSSEASPKQCNGSFAEVEVGLETLTGDQNESASASRKRVRED) are disordered. Polar residues-rich tracts occupy residues 369–383 (NKSS…QCNG) and 396–405 (TGDQNESASA).

Belongs to the MYB-CC family. Homodimers and heterodimers. Interacts with MED25. Does not interact with PHL2 or PHL3. Expressed in shoots and roots.

The protein resides in the nucleus. Transcription factor acting as central integrator of phosphate starvation responses. Regulates FER1 expression upon phosphate starvation, linking iron and phosphate homeostasis. This chain is Protein PHR1-LIKE 1 (PHL1), found in Arabidopsis thaliana (Mouse-ear cress).